We begin with the raw amino-acid sequence, 360 residues long: Alpha-methylacyl-CoA racemase (360 aa).

Substrate is bound by residues Arg-38, Ala-59–Lys-62, Gly-83–Arg-85, Arg-91, and Gly-125–Tyr-130. His-126 functions as the Proton acceptor in the catalytic mechanism. The active-site Proton donor is the Asp-156.

This sequence belongs to the CoA-transferase III family. In terms of assembly, homodimer.

The catalysed reaction is a (2S)-2-methylacyl-CoA = a (2R)-2-methylacyl-CoA. It carries out the reaction (2S)-2-methyltetradecanoyl-CoA = (2R)-2-methyltetradecanoyl-CoA. The enzyme catalyses (2R)-pristanoyl-CoA = (2S)-pristanoyl-CoA. It catalyses the reaction (25S)-3-oxocholest-4-en-26-oyl-CoA = (25R)-3-oxocholest-4-en-26-oyl-CoA. The catalysed reaction is (2S)-ibuprofenoyl-CoA = (2R)-ibuprofenoyl-CoA. Its activity is regulated as follows. Inactivated by N,N-dialkylcarbamoyl-CoA substrate-product analogs. In terms of biological role, catalyzes the epimerization of (2R)- and (2S)-methylacyl-coenzyme A (CoA) thioesters. Accepts as substrates a wide range of alpha-methylacyl-CoAs, including (2R)-2-methylmyristoyl-CoA and (2S)-2-methylmyristoyl-CoA, (2R)-pristanoyl-CoA and (2S)-pristanoyl-CoA, and the cholesterol esters (25R)-3-oxo-cholest-4-en-26-oyl-CoA and (25S)-3-oxo-cholest-4-en-26-oyl-CoA. Can also catalyze the interconversion of the non-physiologic substrates (2R)-ibuprofenoyl-CoA and (2S)-ibuprofenoyl-CoA, which are potential competitive inhibitors of the enzyme. This chain is Alpha-methylacyl-CoA racemase, found in Mycobacterium tuberculosis (strain ATCC 25618 / H37Rv).